Here is a 984-residue protein sequence, read N- to C-terminus: Calsyntenin-1 (984 aa).

A signal peptide spans 1–18; the sequence is MRTAYFIFVGALLGVSYA. Topologically, residues 19 to 850 are extracellular; it reads KHHHAARAPI…VGQGAIAGGA (832 aa). Cadherin domains follow at residues 66–142 and 143–257; these read YLLT…APEI and ENPW…APGV. N-linked (GlcNAc...) asparagine glycosylation is found at N206 and N305. A helical membrane pass occupies residues 851 to 871; sequence VAVVVVVCVGFLLVLLVIGVL. Residues 872-984 lie on the Cytoplasmic side of the membrane; it reads KMRDTPMPRR…ISTNARSYRV (113 aa). Residues 878 to 959 are disordered; sequence MPRRRRQKRQ…QTEVLPHLDA (82 aa). The span at 886–896 shows a compositional bias: basic and acidic residues; the sequence is RQSDGGMHWDD. Positions 918–951 are enriched in acidic residues; that stretch reads EFSDEEEEEETDGESECSYRDEEDDVSEDEEDQT.

It belongs to the calsyntenin family. In terms of assembly, interacts with isoform c of daf-2 (daf-2c); promoting daf-2c localization to synaptic regions. Interacts with klc-2. Interacts with unc-104. Post-translationally, a proportion of the protein is proteolytically cleaved before the transmembrane domain in neurons, leading to release in the extracellular space. Widely expressed in the nervous system. Highly expressed in many head neurons, including most amphid sensory neurons. Also expressed in other tissues, such as intestine and gonadal sheath cells.

It is found in the golgi apparatus membrane. The protein resides in the perikaryon. It localises to the cell projection. The protein localises to the axon. Its subcellular location is the secreted. It is found in the synaptic cleft. Cell adhesion molecule involved in associative learning and memory. Acts as a regulator of GABAergic synaptic transmission at neuromuscular junctions by regulating GABA synaptic vesicle precursor transport: possibly functions as a cargo adapter for unc-104-mediated transport of synaptic vesicle precursors. Promotes localization of isoform c of daf-2 (daf-2c) to synaptic regions by acting as a signaling adapter between klc-2 and daf-2c. In terms of biological role, acts as aregulator of glutamate signaling in the sensory neurons by inhibiting the activity of command interneurons, thereby negatively regulating motor circuit activity and locomotion. The sequence is that of Calsyntenin-1 from Caenorhabditis elegans.